Consider the following 471-residue polypeptide: MLDFMDYIQLAFAEATNWNRDNSYSFLTATAQSLLDFSTPERLRVHLSSLATPHFATSYTLGTVGLIDGSVSYLYSTVPLNNTPSRSALIPLRKLARGYRQVQPPVAPVEDWGWQSLLGGLGSSESKPSGNGDSQPSLGRKATLLNATLHLPPPTTLNALFLRRISPTMQLSLAVCSTRGAPLSNSAPQASLLGQLSHDTGKYSNEYLFSTDNSLFGWRGLWNFGPDPRHPKENPSPRLSLLSAGAEAYYSPVSSLIGMSTGLRFSTLPAATEMPSSSSSTSSTTTTSNHGTPISTFPYTLTLVLTPLTGSLSTTYSLRASPNLAFSSRFGFNVYSWESEMVAGCELWRKRRKSSPPPVDDDGLEWARRKMRMADTPGVPPVEPPSTHNRDEENESVLKIRVDQSWNVRLLWEGRVKELLVSAGVGLGPSSFSSSSWAANSTAAGGGQSVGGGVSGKSYWHGVGVSVSYSS.

Disordered stretches follow at residues 272–291 (TEMPSSSSSTSSTTTTSNHG), 374–394 (ADTPGVPPVEPPSTHNRDEEN), and 436–455 (SWAANSTAAGGGQSVGGGVS). Residues 276–288 (SSSSSTSSTTTTS) are compositionally biased toward low complexity. The span at 444–455 (AGGGQSVGGGVS) shows a compositional bias: gly residues.

It belongs to the MDM10 family. In terms of assembly, component of the ER-mitochondria encounter structure (ERMES) or MDM complex, composed of mmm1, mdm10, mdm12 and mdm34. Associates with the mitochondrial outer membrane sorting assembly machinery SAM(core) complex.

It is found in the mitochondrion outer membrane. Its function is as follows. Component of the ERMES/MDM complex, which serves as a molecular tether to connect the endoplasmic reticulum and mitochondria. Components of this complex are involved in the control of mitochondrial shape and protein biogenesis and may function in phospholipid exchange. mdm10 is involved in the late assembly steps of the general translocase of the mitochondrial outer membrane (TOM complex). Functions in the tom40-specific route of the assembly of outer membrane beta-barrel proteins, including the association of tom40 with the receptor tom22 and small TOM proteins. Can associate with the SAM(core) complex as well as the mdm12-mmm1 complex, both involved in late steps of the major beta-barrel assembly pathway, that is responsible for biogenesis of all outer membrane beta-barrel proteins. May act as a switch that shuttles between both complexes and channels precursor proteins into the tom40-specific pathway. Plays a role in mitochondrial morphology and in the inheritance of mitochondria. This chain is Mitochondrial distribution and morphology protein 10 (mdmB), found in Neosartorya fischeri (strain ATCC 1020 / DSM 3700 / CBS 544.65 / FGSC A1164 / JCM 1740 / NRRL 181 / WB 181) (Aspergillus fischerianus).